A 265-amino-acid polypeptide reads, in one-letter code: Leucyl/phenylalanyl-tRNA--protein transferase (265 aa).

The tract at residues 244–265 (LDTGPDPASSSVTEISLRPAAP) is disordered.

This sequence belongs to the L/F-transferase family.

It is found in the cytoplasm. The catalysed reaction is N-terminal L-lysyl-[protein] + L-leucyl-tRNA(Leu) = N-terminal L-leucyl-L-lysyl-[protein] + tRNA(Leu) + H(+). It carries out the reaction N-terminal L-arginyl-[protein] + L-leucyl-tRNA(Leu) = N-terminal L-leucyl-L-arginyl-[protein] + tRNA(Leu) + H(+). It catalyses the reaction L-phenylalanyl-tRNA(Phe) + an N-terminal L-alpha-aminoacyl-[protein] = an N-terminal L-phenylalanyl-L-alpha-aminoacyl-[protein] + tRNA(Phe). In terms of biological role, functions in the N-end rule pathway of protein degradation where it conjugates Leu, Phe and, less efficiently, Met from aminoacyl-tRNAs to the N-termini of proteins containing an N-terminal arginine or lysine. The polypeptide is Leucyl/phenylalanyl-tRNA--protein transferase (Methylibium petroleiphilum (strain ATCC BAA-1232 / LMG 22953 / PM1)).